The primary structure comprises 339 residues: Dihydroorotate dehydrogenase (quinone) (339 aa).

FMN is bound by residues 62 to 66 and T86; that span reads AGMDK. K66 contacts substrate. 111–115 contacts substrate; sequence NRMGF. FMN-binding residues include N139 and N172. N172 provides a ligand contact to substrate. S175 serves as the catalytic Nucleophile. A substrate-binding site is contributed by N177. Positions 217 and 245 each coordinate FMN. Position 246-247 (246-247) interacts with substrate; that stretch reads NT. FMN contacts are provided by residues G268, G297, and 318–319; that span reads YS.

The protein belongs to the dihydroorotate dehydrogenase family. Type 2 subfamily. In terms of assembly, monomer. FMN is required as a cofactor.

It is found in the cell membrane. The enzyme catalyses (S)-dihydroorotate + a quinone = orotate + a quinol. It participates in pyrimidine metabolism; UMP biosynthesis via de novo pathway; orotate from (S)-dihydroorotate (quinone route): step 1/1. Functionally, catalyzes the conversion of dihydroorotate to orotate with quinone as electron acceptor. This chain is Dihydroorotate dehydrogenase (quinone), found in Shewanella sp. (strain ANA-3).